Reading from the N-terminus, the 91-residue chain is MATNKFLSILLLSLMAFAAILLPMISGQIITCLPGECTNPSECNAACKSNGYKGGACVSMSIGSTTGACCCKPNFKSQDSFKSNDIIINNN.

An N-terminal signal peptide occupies residues 1–27 (MATNKFLSILLLSLMAFAAILLPMISG). Intrachain disulfides connect Cys32–Cys71, Cys37–Cys57, Cys43–Cys69, and Cys47–Cys70.

Belongs to the DEFL family.

It is found in the secreted. The protein is Putative defensin-like protein 83 (LCR46) of Arabidopsis thaliana (Mouse-ear cress).